A 632-amino-acid polypeptide reads, in one-letter code: Putative ferric transport system permease protein FbpB 1 (632 aa).

The next 15 membrane-spanning stretches (helical) occupy residues 5-25 (SFNL…LPLL), 37-57 (LFLT…YKIS), 58-78 (MGYS…LSLA), 93-113 (LLCI…AIFV), 144-164 (LFLS…FALY), 178-198 (IFSI…VTLM), 223-243 (GFNG…FMIL), 270-290 (YQII…IVFI), 299-319 (PLVL…YIAG), 330-350 (LGSM…IWIG), 377-397 (IIGM…SIFY), 436-456 (IYAG…AYIV), 469-489 (FLTM…YILA), 490-510 (FNNA…SMVM), and 547-567 (CFIV…TSFV). Positions 140–345 (ITNSLFLSGF…IFSLAIFIIQ (206 aa)) constitute an ABC transmembrane type-1 1 domain. The ABC transmembrane type-1 2 domain maps to 431–632 (LINTLIYAGI…DCRRYAYFPF (202 aa)).

The protein belongs to the binding-protein-dependent transport system permease family. FbpB subfamily. The complex is composed of two ATP-binding proteins (FbpC), two transmembrane proteins (FbpB) and a solute-binding protein (FbpA).

Its subcellular location is the cell inner membrane. In terms of biological role, part of the ABC transporter complex FbpABC (TC 3.A.1.10.1) involved in Fe(3+) ions import. Probably responsible for the translocation of the substrate across the membrane. This chain is Putative ferric transport system permease protein FbpB 1 (fbpB1), found in Haemophilus influenzae (strain ATCC 51907 / DSM 11121 / KW20 / Rd).